Reading from the N-terminus, the 219-residue chain is 2-hydroxy-3-keto-5-methylthiopentenyl-1-phosphate phosphatase (219 aa).

It belongs to the HAD-like hydrolase superfamily. MtnX family.

It carries out the reaction 2-hydroxy-5-methylsulfanyl-3-oxopent-1-enyl phosphate + H2O = 1,2-dihydroxy-5-(methylsulfanyl)pent-1-en-3-one + phosphate. It functions in the pathway amino-acid biosynthesis; L-methionine biosynthesis via salvage pathway; L-methionine from S-methyl-5-thio-alpha-D-ribose 1-phosphate: step 4/6. Functionally, dephosphorylates 2-hydroxy-3-keto-5-methylthiopentenyl-1-phosphate (HK-MTPenyl-1-P) yielding 1,2-dihydroxy-3-keto-5-methylthiopentene (DHK-MTPene). The protein is 2-hydroxy-3-keto-5-methylthiopentenyl-1-phosphate phosphatase of Bacillus mycoides (strain KBAB4) (Bacillus weihenstephanensis).